A 404-amino-acid polypeptide reads, in one-letter code: Probable tRNA sulfurtransferase (404 aa).

The THUMP domain occupies 60–165 (QPIVEALKLV…DEAAYISYEE (106 aa)). ATP-binding positions include 183 to 184 (ML), 208 to 209 (HF), Arg-265, Gly-287, and Gln-296.

It belongs to the ThiI family.

The protein localises to the cytoplasm. It carries out the reaction [ThiI sulfur-carrier protein]-S-sulfanyl-L-cysteine + a uridine in tRNA + 2 reduced [2Fe-2S]-[ferredoxin] + ATP + H(+) = [ThiI sulfur-carrier protein]-L-cysteine + a 4-thiouridine in tRNA + 2 oxidized [2Fe-2S]-[ferredoxin] + AMP + diphosphate. The catalysed reaction is [ThiS sulfur-carrier protein]-C-terminal Gly-Gly-AMP + S-sulfanyl-L-cysteinyl-[cysteine desulfurase] + AH2 = [ThiS sulfur-carrier protein]-C-terminal-Gly-aminoethanethioate + L-cysteinyl-[cysteine desulfurase] + A + AMP + 2 H(+). It participates in cofactor biosynthesis; thiamine diphosphate biosynthesis. In terms of biological role, catalyzes the ATP-dependent transfer of a sulfur to tRNA to produce 4-thiouridine in position 8 of tRNAs, which functions as a near-UV photosensor. Also catalyzes the transfer of sulfur to the sulfur carrier protein ThiS, forming ThiS-thiocarboxylate. This is a step in the synthesis of thiazole, in the thiamine biosynthesis pathway. The sulfur is donated as persulfide by IscS. The protein is Probable tRNA sulfurtransferase of Streptococcus pyogenes serotype M2 (strain MGAS10270).